A 347-amino-acid polypeptide reads, in one-letter code: 4-hydroxy-2-oxovalerate aldolase (347 aa).

In terms of domain architecture, Pyruvate carboxyltransferase spans 2–252 (ILISDATLRD…DTRTTFERVM (251 aa)). A substrate-binding site is contributed by 10–11 (RD). Asp11 serves as a coordination point for Mn(2+). The Proton acceptor role is filled by His14. Residues Ser164 and His191 each contribute to the substrate site. Mn(2+) contacts are provided by His191 and His193.

Belongs to the 4-hydroxy-2-oxovalerate aldolase family.

The enzyme catalyses (S)-4-hydroxy-2-oxopentanoate = acetaldehyde + pyruvate. The chain is 4-hydroxy-2-oxovalerate aldolase from Burkholderia pseudomallei (strain 1106a).